Consider the following 474-residue polypeptide: MKLSMPRFDQAPVLVVGDVMLDRYWHGGTSRISPEAPVPVVKVEQIEDRPGGAANVALNIAALGAPASLVGVTGDDEAAESLANSLRGAGVRALFQRIAHQPTIVKLRVMSRHQQLLRIDFEEPFATDALALNGQVDELLEGVKVLVLSDYGKGALKNHQELIQAAKAKGIPVLADPKGKDFSIYRGASLITPNLSEFEAIVGGCADEHDLVTKGAALMADLDLGALLVTRGEHGMTLLRPGHPAMHLPARAREVFDVTGAGDTVISTLAASIAAGEELPHAVALANLAAGIVVGKLGTAAISAPELRRAIQRSEGSERGVLTIEQLLLAIDDARAHNESIVFTNGCFDILHAGHVTYLEQARAQGDRLIVAVNDDASVSRLKGPGRPINSVDRRMAVLAGLGAVDWVISFPEATPENLLAQVKPDVLVKGGDYSVDQVVGADIVSAYGGKVKVLGLVENSSTTAIVEKIRNNE.

The segment at 1-317 (MKLSMPRFDQ…RRAIQRSEGS (317 aa)) is ribokinase. 194 to 197 (NLSE) provides a ligand contact to ATP. The active site involves D263. Residues 343-474 (FTNGCFDILH…AIVEKIRNNE (132 aa)) are cytidylyltransferase.

It in the N-terminal section; belongs to the carbohydrate kinase PfkB family. The protein in the C-terminal section; belongs to the cytidylyltransferase family. As to quaternary structure, homodimer.

It catalyses the reaction D-glycero-beta-D-manno-heptose 7-phosphate + ATP = D-glycero-beta-D-manno-heptose 1,7-bisphosphate + ADP + H(+). The catalysed reaction is D-glycero-beta-D-manno-heptose 1-phosphate + ATP + H(+) = ADP-D-glycero-beta-D-manno-heptose + diphosphate. The protein operates within nucleotide-sugar biosynthesis; ADP-L-glycero-beta-D-manno-heptose biosynthesis; ADP-L-glycero-beta-D-manno-heptose from D-glycero-beta-D-manno-heptose 7-phosphate: step 1/4. It functions in the pathway nucleotide-sugar biosynthesis; ADP-L-glycero-beta-D-manno-heptose biosynthesis; ADP-L-glycero-beta-D-manno-heptose from D-glycero-beta-D-manno-heptose 7-phosphate: step 3/4. Its function is as follows. Catalyzes the phosphorylation of D-glycero-D-manno-heptose 7-phosphate at the C-1 position to selectively form D-glycero-beta-D-manno-heptose-1,7-bisphosphate. Catalyzes the ADP transfer from ATP to D-glycero-beta-D-manno-heptose 1-phosphate, yielding ADP-D-glycero-beta-D-manno-heptose. The polypeptide is Bifunctional protein HldE (Pseudomonas fluorescens (strain SBW25)).